Here is a 156-residue protein sequence, read N- to C-terminus: Small ribosomal subunit protein uS7 (156 aa).

It belongs to the universal ribosomal protein uS7 family. In terms of assembly, part of the 30S ribosomal subunit. Contacts proteins S9 and S11.

In terms of biological role, one of the primary rRNA binding proteins, it binds directly to 16S rRNA where it nucleates assembly of the head domain of the 30S subunit. Is located at the subunit interface close to the decoding center, probably blocks exit of the E-site tRNA. The sequence is that of Small ribosomal subunit protein uS7 from Anaeromyxobacter sp. (strain Fw109-5).